The following is a 183-amino-acid chain: UPF0200 protein MMP1282 (183 aa).

8 to 15 lines the ATP pocket; sequence GMPGSGKS.

This sequence belongs to the UPF0200 family.

In Methanococcus maripaludis (strain DSM 14266 / JCM 13030 / NBRC 101832 / S2 / LL), this protein is UPF0200 protein MMP1282.